A 386-amino-acid chain; its full sequence is 17-hydroxy-3-oxo-4-pregnene-20-carboxyl-CoA lyase (386 aa).

Tyr-292 acts as the Proton acceptor in catalysis. Catalysis depends on Tyr-342, which acts as the Proton donor.

This sequence belongs to the thiolase-like superfamily. In terms of assembly, homodimer. Interacts with the ChsH1/ChsH2 hydratase via the DUF35 C-terminal region of ChsH2 (ChsH2-DUF35). The ChsH1-ChsH2-Ltp2 protein complex is composed of two protomers that form a heterohexameric structure through the Ltp2 dimerization interface.

It carries out the reaction 17-hydroxy-3-oxochol-4-en-22-oyl-CoA = androst-4-ene-3,17-dione + propanoyl-CoA. The protein operates within steroid metabolism; cholesterol degradation. Functionally, involved in cholesterol side chain degradation. When associated with the ChsH1/ChsH2 hydratase, catalyzes the retroaldol cleavage of 17-hydroxy-3-oxo-4-pregnene-20-carboxyl-CoA (17-HOPC-CoA) produced by the hydratase, forming androst-4-ene-3,17-dione and propionyl-CoA. The chain is 17-hydroxy-3-oxo-4-pregnene-20-carboxyl-CoA lyase from Mycobacterium tuberculosis (strain ATCC 25618 / H37Rv).